A 277-amino-acid polypeptide reads, in one-letter code: Purine nucleoside phosphorylase 2 (277 aa).

Phosphate-binding positions include His-65, 85–87 (RGH), and Ala-117. Glu-197 serves as a coordination point for a purine D-ribonucleoside. Ser-216 contacts phosphate. A purine D-ribonucleoside is bound at residue Asn-239.

Belongs to the PNP/MTAP phosphorylase family. In terms of assembly, hexamer. Dimer of trimers.

The enzyme catalyses a purine D-ribonucleoside + phosphate = a purine nucleobase + alpha-D-ribose 1-phosphate. It functions in the pathway purine metabolism; xanthosine degradation. Its pathway is purine metabolism; purine nucleoside salvage. With respect to regulation, rapidly inactivated by p-chloromercuriphenylsulfonic acid (p-CMB). Dithiothreitol incubation restores the activity. The purine nucleoside phosphorylases catalyze the phosphorolytic breakdown of the N-glycosidic bond in the beta-(deoxy)ribonucleoside molecules, with the formation of the corresponding free purine bases and pentose-1-phosphate. This protein can degrade all purine nucleosides including xanthosine, inosine and guanosine, but cannot cleave adenosine, deoxyadenosine or hypoxanthine arabinoside. Has a preference for the neutral over the monoanionic form of xanthosine. This is Purine nucleoside phosphorylase 2 (xapA) from Escherichia coli (strain K12).